The primary structure comprises 261 residues: Metallo-beta-lactamase fold-containing protein ST1585 (261 aa).

Residues histidine 58, histidine 60, aspartate 62, histidine 63, histidine 148, aspartate 165, and histidine 207 each coordinate Zn(2+).

Belongs to the metallo-beta-lactamase superfamily. In terms of assembly, monomer.

The chain is Metallo-beta-lactamase fold-containing protein ST1585 from Sulfurisphaera tokodaii (strain DSM 16993 / JCM 10545 / NBRC 100140 / 7) (Sulfolobus tokodaii).